The chain runs to 425 residues: Serine--tRNA ligase (425 aa).

Position 228 to 230 (228 to 230) interacts with L-serine; that stretch reads TAE. 259 to 261 contributes to the ATP binding site; that stretch reads RSE. Glu282 provides a ligand contact to L-serine. Residue 346-349 coordinates ATP; it reads EIAS. Position 382 (Ser382) interacts with L-serine.

It belongs to the class-II aminoacyl-tRNA synthetase family. Type-1 seryl-tRNA synthetase subfamily. Homodimer. The tRNA molecule binds across the dimer.

It is found in the cytoplasm. The catalysed reaction is tRNA(Ser) + L-serine + ATP = L-seryl-tRNA(Ser) + AMP + diphosphate + H(+). It carries out the reaction tRNA(Sec) + L-serine + ATP = L-seryl-tRNA(Sec) + AMP + diphosphate + H(+). It participates in aminoacyl-tRNA biosynthesis; selenocysteinyl-tRNA(Sec) biosynthesis; L-seryl-tRNA(Sec) from L-serine and tRNA(Sec): step 1/1. Its function is as follows. Catalyzes the attachment of serine to tRNA(Ser). Is also able to aminoacylate tRNA(Sec) with serine, to form the misacylated tRNA L-seryl-tRNA(Sec), which will be further converted into selenocysteinyl-tRNA(Sec). The chain is Serine--tRNA ligase from Rickettsia akari (strain Hartford).